We begin with the raw amino-acid sequence, 269 residues long: MQGVSRTSLTEVIRRLDDILPSANTATLGHELFEVVALLDQEHSLRRWLADPAGSPDSKSELVNSLLETKVSPATLLVVSDVVRAQWSRPRDLVDAVEQAAVLATVAEHASARELEGVEDELFRFGRIVAGQPELRAALTTDGASIEHKRTLVENLLSGKVSTATLTLVTEAVTRPRGRTLEQGLEHFSQLVAERAKHYIAVVRAAVPLSEAQQSRLQAALTRIYGRDIHLNIEITPEIVGGLSIRVGDEVIDGTIAGRIAEVRRRLAG.

The protein belongs to the ATPase delta chain family. F-type ATPases have 2 components, F(1) - the catalytic core - and F(0) - the membrane proton channel. F(1) has five subunits: alpha(3), beta(3), gamma(1), delta(1), epsilon(1). F(0) has three main subunits: a(1), b(2) and c(10-14). The alpha and beta chains form an alternating ring which encloses part of the gamma chain. F(1) is attached to F(0) by a central stalk formed by the gamma and epsilon chains, while a peripheral stalk is formed by the delta and b chains.

The protein resides in the cell membrane. Functionally, f(1)F(0) ATP synthase produces ATP from ADP in the presence of a proton or sodium gradient. F-type ATPases consist of two structural domains, F(1) containing the extramembraneous catalytic core and F(0) containing the membrane proton channel, linked together by a central stalk and a peripheral stalk. During catalysis, ATP synthesis in the catalytic domain of F(1) is coupled via a rotary mechanism of the central stalk subunits to proton translocation. This protein is part of the stalk that links CF(0) to CF(1). It either transmits conformational changes from CF(0) to CF(1) or is implicated in proton conduction. The polypeptide is ATP synthase subunit delta (Thermobifida fusca (strain YX)).